The following is a 2892-amino-acid chain: E3 ubiquitin-protein ligase lubel (2892 aa).

Disordered stretches follow at residues 23–55, 125–252, 395–423, 483–631, 644–672, 685–737, 757–865, and 949–975; these read DRIG…KSTP, KQHM…QLEK, SQQH…QFGS, PSAA…ESEG, QKLQ…ENTQ, AHEE…PDHE, CCKT…DNSL, and DRFT…QQES. The span at 40 to 52 shows a compositional bias: low complexity; it reads GLPKAPALPPKAK. Gly residues predominate over residues 189 to 198; that stretch reads GWRGSLGGGA. Over residues 206–215 the composition is skewed to polar residues; the sequence is ATSSANQMNN. Composition is skewed to low complexity over residues 402 to 412 and 483 to 503; these read AQHPHQALPQH and PSAA…TPSR. Acidic residues predominate over residues 516–528; the sequence is VDDELTDDEDSDQ. Over residues 535-546 the composition is skewed to polar residues; sequence VSNRSGMTSASR. Positions 547–560 are enriched in basic residues; sequence SQHHQNHIQPRQRR. Residues 606-623 show a composition bias toward polar residues; sequence GTLTRNKTATDSARTSRI. A compositionally biased stretch (basic and acidic residues) spans 647–670; the sequence is QEADQHKSSKKAEPKRKPEMKDEN. The segment covering 801–813 has biased composition (polar residues); the sequence is KPTTKSQQPSQKS. Composition is skewed to low complexity over residues 818–837 and 846–856; these read SKTT…AVNS and KTPSKSTLKTS. Residues 1042–1187 form the UBA-like 1 domain; sequence MHIILKELEL…LMRIWGSPNG (146 aa). Disordered stretches follow at residues 1214–1252, 1477–1520, 1557–1653, 1717–2019, 2032–2082, 2191–2316, and 2411–2431; these read LQPP…SPYQ, LPTA…KLET, AEVQ…KILS, STTI…NLSE, RDEI…EGNT, SAPP…PLRS, and DYET…EPQK. Positions 1241–1252 are enriched in polar residues; it reads VKSTYATPSPYQ. A compositionally biased stretch (basic and acidic residues) spans 1510 to 1519; that stretch reads EELRQQEKLE. The span at 1560–1571 shows a compositional bias: polar residues; it reads QVQSDDQPSTSR. Basic residues predominate over residues 1576 to 1587; sequence RAKRSQQSRKGR. The span at 1595–1607 shows a compositional bias: polar residues; it reads PTNRTKLPNNIDQ. The segment covering 1608-1627 has biased composition (basic and acidic residues); that stretch reads KVNESKTAAKETEAVKDKDL. Composition is skewed to polar residues over residues 1630 to 1653, 1717 to 1726, and 1764 to 1779; these read AASN…KILS, STTISEQSEG, and KSPT…TSHI. The span at 1822–1834 shows a compositional bias: low complexity; that stretch reads LSSSSLRSESRSS. A compositionally biased stretch (polar residues) spans 1859-1881; that stretch reads TVSSPKSEQLSDNQEVNLVSQET. Over residues 1918–1927 the composition is skewed to acidic residues; it reads DSDEVFEDAP. Over residues 1953 to 1963 the composition is skewed to basic and acidic residues; it reads DGQRAETKSPE. Composition is skewed to acidic residues over residues 1964-1975 and 2036-2079; these read DEVVILLDEESQ and SMDE…DGEE. 2 stretches are compositionally biased toward low complexity: residues 2214–2230 and 2269–2291; these read PSEV…ALPI and SGTA…TVSK. Residues 2297 to 2308 are compositionally biased toward polar residues; sequence NEPTNKSNSTPL. A compositionally biased stretch (acidic residues) spans 2411-2425; that stretch reads DYETSATEEEQEEPN. The 57-residue stretch at 2457-2513 folds into the UBA-like 2 domain; the sequence is DPAILARKYVDQELVTNIAEAQIAATLVSMKFSEDVALWAARECSDLDQAIAMLQQE. Residues 2510–2748 are TRIAD supradomain; it reads LQQECELCMN…LGLHAHHPRN (239 aa). Positions 2514, 2517, 2537, 2540, 2618, 2621, 2636, 2639, 2644, 2647, 2655, 2660, 2690, and 2693 each coordinate Zn(2+). The segment at 2514 to 2564 adopts an RING-type 1 zinc-finger fold; sequence CELCMNSYPMNQMVSMLKCLHKCCKQCAKSYFTVQITDRSINDCSCPFCKL. Positions 2514–2892 are necessary for linear polyubiquitination and sufficent for inducing DptA in the intestine; the sequence is CELCMNSYPM…IKKHIPLKSA (379 aa). The segment at 2601–2660 adopts an IBR-type zinc-finger fold; the sequence is QRKLRDRSLLQDPNFKWCIQCSSGFFARPKQKRLICPDCGSVTCAQCRKPWERQHEGSSC. The RING-type 2; atypical zinc-finger motif lies at 2690 to 2720; it reads CPKCKFRYSLARGGCMHFTCTQCKFEFCYGC. C2704 is a catalytic residue. The Zn(2+) site is built by C2709 and C2712.

The protein belongs to the RBR family.

The enzyme catalyses [E2 ubiquitin-conjugating enzyme]-S-ubiquitinyl-L-cysteine + [acceptor protein]-L-lysine = [E2 ubiquitin-conjugating enzyme]-L-cysteine + [acceptor protein]-N(6)-ubiquitinyl-L-lysine.. In terms of biological role, E3 ubiquitin-protein ligase which conjugates linear 'Met-1'- and 'Lys-63'-linked polyubiquitin chains to substrates and plays a crucial role in the NF-kappa-B intestinal inflammatory response to oral infection and in the heat stress response. Preferentially interacts with 'Lys-63'-linked, and to a lesser extent 'Lys-48'-linked, polyubiquitin chains. Upon oral infection with a Gram-negative bacterium E.carotovora subsp. carotovora 15, functions with the E2 ubiquitin-conjugating enzyme Ubc10 to mediate the conjugation of 'Lys-63'- and linear 'Met-1'-linked polyubiquitin chains to the substrate key which is essential for activation of the NF-kappa-B signaling cascade in the adult intestinal epithelium. It is not required for systemic immune response to septic infection with either E.carotovora subsp. carotovora 15 or Gram-positive M.luteus bacteria. Function in controlling linear ubiquitination is also essential for regulating the heat stress response in adults. This function may require the E2 ubiquitin-conjugating enzymes Ubc10 or eff. The sequence is that of E3 ubiquitin-protein ligase lubel from Drosophila melanogaster (Fruit fly).